The chain runs to 572 residues: Neuronal acetylcholine receptor subunit alpha-9-I (572 aa).

Residues Met-1–Ser-19 form the signal peptide. Topologically, residues Ala-20 to Leu-232 are extracellular. Residue Asn-51 is glycosylated (N-linked (GlcNAc...) asparagine). Cys-149 and Cys-163 are oxidised to a cystine. Asn-164 is a glycosylation site (N-linked (GlcNAc...) asparagine). An intrachain disulfide couples Cys-213 to Cys-214. 3 consecutive transmembrane segments (helical) span residues Phe-233 to Phe-253, Val-263 to Ser-283, and Tyr-297 to Ile-317. Residues His-318–Arg-550 are Cytoplasmic-facing. Residues Gly-405–Arg-458 form a disordered region. The span at Asn-435–Gln-447 shows a compositional bias: low complexity. Residues Phe-551 to Ala-571 traverse the membrane as a helical segment.

This sequence belongs to the ligand-gated ion channel (TC 1.A.9) family. Acetylcholine receptor (TC 1.A.9.1) subfamily. As to expression, expressed in the liver, olfactory mucosa, pituitary gland, hair cells of the saccule and spleen.

It localises to the postsynaptic cell membrane. Its subcellular location is the cell membrane. In Oncorhynchus mykiss (Rainbow trout), this protein is Neuronal acetylcholine receptor subunit alpha-9-I (nachra9).